The primary structure comprises 240 residues: Methylthioribulose-1-phosphate dehydratase (240 aa).

A substrate-binding site is contributed by cysteine 99. Zn(2+) is bound by residues histidine 116 and histidine 118. The active-site Proton donor/acceptor is glutamate 145. Zn(2+) is bound at residue histidine 201.

Belongs to the aldolase class II family. MtnB subfamily. Zn(2+) serves as cofactor.

It localises to the cytoplasm. It carries out the reaction 5-(methylsulfanyl)-D-ribulose 1-phosphate = 5-methylsulfanyl-2,3-dioxopentyl phosphate + H2O. It functions in the pathway amino-acid biosynthesis; L-methionine biosynthesis via salvage pathway; L-methionine from S-methyl-5-thio-alpha-D-ribose 1-phosphate: step 2/6. Catalyzes the dehydration of methylthioribulose-1-phosphate (MTRu-1-P) into 2,3-diketo-5-methylthiopentyl-1-phosphate (DK-MTP-1-P). This Paracoccidioides brasiliensis (strain Pb03) protein is Methylthioribulose-1-phosphate dehydratase.